Here is a 257-residue protein sequence, read N- to C-terminus: Phosphatidylglycerol--prolipoprotein diacylglyceryl transferase (257 aa).

The next 7 helical transmembrane spans lie at Phe13–Gly33, Phe49–Phe69, Ile88–Tyr108, Phe123–His143, Phe152–Ile172, Tyr186–Phe202, and Ile223–Met243. Residue Arg136 participates in a 1,2-diacyl-sn-glycero-3-phospho-(1'-sn-glycerol) binding.

This sequence belongs to the Lgt family.

Its subcellular location is the cell membrane. It catalyses the reaction L-cysteinyl-[prolipoprotein] + a 1,2-diacyl-sn-glycero-3-phospho-(1'-sn-glycerol) = an S-1,2-diacyl-sn-glyceryl-L-cysteinyl-[prolipoprotein] + sn-glycerol 1-phosphate + H(+). Its pathway is protein modification; lipoprotein biosynthesis (diacylglyceryl transfer). Functionally, catalyzes the transfer of the diacylglyceryl group from phosphatidylglycerol to the sulfhydryl group of the N-terminal cysteine of a prolipoprotein, the first step in the formation of mature lipoproteins. The polypeptide is Phosphatidylglycerol--prolipoprotein diacylglyceryl transferase (Caldanaerobacter subterraneus subsp. tengcongensis (strain DSM 15242 / JCM 11007 / NBRC 100824 / MB4) (Thermoanaerobacter tengcongensis)).